We begin with the raw amino-acid sequence, 434 residues long: Enolase (434 aa).

(2R)-2-phosphoglycerate is bound at residue Gln163. Glu205 serves as the catalytic Proton donor. 3 residues coordinate Mg(2+): Asp242, Glu291, and Asp318. Residues Lys343, Arg372, Ser373, and Lys394 each contribute to the (2R)-2-phosphoglycerate site. Lys343 functions as the Proton acceptor in the catalytic mechanism.

The protein belongs to the enolase family. Mg(2+) is required as a cofactor.

The protein resides in the cytoplasm. Its subcellular location is the secreted. It localises to the cell surface. It catalyses the reaction (2R)-2-phosphoglycerate = phosphoenolpyruvate + H2O. It participates in carbohydrate degradation; glycolysis; pyruvate from D-glyceraldehyde 3-phosphate: step 4/5. Functionally, catalyzes the reversible conversion of 2-phosphoglycerate (2-PG) into phosphoenolpyruvate (PEP). It is essential for the degradation of carbohydrates via glycolysis. This is Enolase from Streptococcus sanguinis (strain SK36).